A 446-amino-acid chain; its full sequence is Glutamyl-tRNA(Gln) amidotransferase subunit D (446 aa).

An Asparaginase/glutaminase domain is found at 90–421 (SEVMIISTGG…DRIKEIMLTN (332 aa)). Residues Thr100, Thr176, Asp177, and Lys255 contribute to the active site.

This sequence belongs to the asparaginase 1 family. GatD subfamily. As to quaternary structure, heterodimer of GatD and GatE.

It carries out the reaction L-glutamyl-tRNA(Gln) + L-glutamine + ATP + H2O = L-glutaminyl-tRNA(Gln) + L-glutamate + ADP + phosphate + H(+). Allows the formation of correctly charged Gln-tRNA(Gln) through the transamidation of misacylated Glu-tRNA(Gln) in organisms which lack glutaminyl-tRNA synthetase. The reaction takes place in the presence of glutamine and ATP through an activated gamma-phospho-Glu-tRNA(Gln). The GatDE system is specific for glutamate and does not act on aspartate. This chain is Glutamyl-tRNA(Gln) amidotransferase subunit D, found in Sulfolobus acidocaldarius (strain ATCC 33909 / DSM 639 / JCM 8929 / NBRC 15157 / NCIMB 11770).